Reading from the N-terminus, the 318-residue chain is ADP-L-glycero-D-manno-heptose-6-epimerase (318 aa).

NADP(+) is bound by residues 10–11, 31–32, lysine 38, lysine 53, 76–80, and asparagine 93; these read FI, DN, and QGACS. Tyrosine 141 serves as the catalytic Proton acceptor. NADP(+) is bound at residue lysine 145. Asparagine 172 serves as a coordination point for substrate. NADP(+) contacts are provided by valine 173 and lysine 181. Lysine 181 serves as the catalytic Proton acceptor. Residues arginine 183, histidine 190, 204–207, arginine 212, and tyrosine 276 each bind substrate; that span reads FEGS.

The protein belongs to the NAD(P)-dependent epimerase/dehydratase family. HldD subfamily. In terms of assembly, homopentamer. The cofactor is NADP(+).

It catalyses the reaction ADP-D-glycero-beta-D-manno-heptose = ADP-L-glycero-beta-D-manno-heptose. Its pathway is nucleotide-sugar biosynthesis; ADP-L-glycero-beta-D-manno-heptose biosynthesis; ADP-L-glycero-beta-D-manno-heptose from D-glycero-beta-D-manno-heptose 7-phosphate: step 4/4. Its function is as follows. Catalyzes the interconversion between ADP-D-glycero-beta-D-manno-heptose and ADP-L-glycero-beta-D-manno-heptose via an epimerization at carbon 6 of the heptose. The chain is ADP-L-glycero-D-manno-heptose-6-epimerase from Brachyspira hyodysenteriae (strain ATCC 49526 / WA1).